Consider the following 1025-residue polypeptide: DNA polymerase (1025 aa).

This sequence belongs to the DNA polymerase type-B family.

The catalysed reaction is DNA(n) + a 2'-deoxyribonucleoside 5'-triphosphate = DNA(n+1) + diphosphate. Functionally, replicates the viral genome. Host DNA polymerases cannot substitute for the viral enzyme in this process. In Noctuidae (owlet moths), this protein is DNA polymerase.